Here is a 548-residue protein sequence, read N- to C-terminus: ATP synthase subunit alpha (548 aa).

172–179 is a binding site for ATP; sequence GDRKTGKT. A disordered region spans residues 510 to 548; it reads QFTTSSGESAAPSEPEAEALAADEVGQETVKVNRPAPKK. The segment covering 514–531 has biased composition (low complexity); sequence SSGESAAPSEPEAEALAA.

This sequence belongs to the ATPase alpha/beta chains family. In terms of assembly, F-type ATPases have 2 components, CF(1) - the catalytic core - and CF(0) - the membrane proton channel. CF(1) has five subunits: alpha(3), beta(3), gamma(1), delta(1), epsilon(1). CF(0) has three main subunits: a(1), b(2) and c(9-12). The alpha and beta chains form an alternating ring which encloses part of the gamma chain. CF(1) is attached to CF(0) by a central stalk formed by the gamma and epsilon chains, while a peripheral stalk is formed by the delta and b chains.

It localises to the cell membrane. It catalyses the reaction ATP + H2O + 4 H(+)(in) = ADP + phosphate + 5 H(+)(out). Produces ATP from ADP in the presence of a proton gradient across the membrane. The alpha chain is a regulatory subunit. This chain is ATP synthase subunit alpha, found in Saccharopolyspora erythraea (strain ATCC 11635 / DSM 40517 / JCM 4748 / NBRC 13426 / NCIMB 8594 / NRRL 2338).